The following is a 1303-amino-acid chain: DNA-directed RNA polymerase subunit beta (1303 aa).

This sequence belongs to the RNA polymerase beta chain family. As to quaternary structure, the RNAP catalytic core consists of 2 alpha, 1 beta, 1 beta' and 1 omega subunit. When a sigma factor is associated with the core the holoenzyme is formed, which can initiate transcription.

It carries out the reaction RNA(n) + a ribonucleoside 5'-triphosphate = RNA(n+1) + diphosphate. DNA-dependent RNA polymerase catalyzes the transcription of DNA into RNA using the four ribonucleoside triphosphates as substrates. This chain is DNA-directed RNA polymerase subunit beta, found in Chlorobaculum tepidum (strain ATCC 49652 / DSM 12025 / NBRC 103806 / TLS) (Chlorobium tepidum).